Here is a 444-residue protein sequence, read N- to C-terminus: MIAAPLDAVADSKGKKPFYTHLYVQVLAAIAAGILLGHFYPEFGTQLKPLGDAFIKLVKMIIAPVIFLTVATGIAGMSDLQKVGRVAGKAMLYFLTFSTLALIIGLIVANVVQPGAGMNIDPASLDPAAVAGYAAKAHEQSIVGFLTNIIPTTIVGAFADGDILQVLFFSVLFGIALAMVGEKSEPVVNFLNALTAPVFKLVAILMKAAPIGAFGAMAFTIGKYGVGSIANLAMLIGTFYITSLLFVLVVLGAVARYNGFSIVALLRYIKEELLLVLGTSSSEAALPGLMNKMEKAGCKRSVVGLVIPTGYSFNLDGTNIYMTLAALFIAQATGIQLSWGDQILLLLVAMLSSKGAAGITGAGFITLAATLSVVPSVPVAGMALILGIDRFMSECRALTNLVGNAVATIVVARWENELDTAQLAAALGGQTGEMAPAGGLQPAE.

The next 9 helical transmembrane spans lie at 17–37 (PFYTHLYVQVLAAIAAGILLG), 57–77 (LVKMIIAPVIFLTVATGIAGM), 92–112 (LYFLTFSTLALIIGLIVANVV), 139–159 (EQSIVGFLTNIIPTTIVGAFA), 161–181 (GDILQVLFFSVLFGIALAMVG), 201–221 (LVAILMKAAPIGAFGAMAFTI), 234–254 (MLIGTFYITSLLFVLVVLGAV), 320–340 (IYMTLAALFIAQATGIQLSWG), and 368–388 (AATLSVVPSVPVAGMALILGI).

The protein belongs to the dicarboxylate/amino acid:cation symporter (DAACS) (TC 2.A.23) family.

The protein resides in the cell inner membrane. Functionally, responsible for the transport of dicarboxylates such as succinate, fumarate, and malate from the periplasm across the membrane. The polypeptide is C4-dicarboxylate transport protein (Rhizobium johnstonii (strain DSM 114642 / LMG 32736 / 3841) (Rhizobium leguminosarum bv. viciae)).